A 569-amino-acid polypeptide reads, in one-letter code: Acyl-CoA-binding domain-containing protein 5 (569 aa).

Residues 1-31 (MELFYELLLTAAASLLVAFLLARLLASAATA) form the signal peptide. One can recognise an ACB domain in the interval 415–506 (IEKRFGVAAA…LSEAIPGWMG (92 aa)). Residues Lys-474 and Tyr-493 each coordinate an acyl-CoA. A glycan (N-linked (GlcNAc...) asparagine) is linked at Asn-508. 2 stretches are compositionally biased toward polar residues: residues 533 to 544 (INQHDSQGNEDN) and 552 to 569 (LTSS…IPAE). The disordered stretch occupies residues 533 to 569 (INQHDSQGNEDNTGMYEGHLTSSPNPEKGQSSDIPAE).

The protein belongs to the ACBP family. Highly expressed in seeds and leaves. Expressed at low levels in roots.

The protein localises to the endoplasmic reticulum. Its function is as follows. Binds medium- and long-chain acyl-CoA esters with high affinity. Can interact in vitro with palmitoyl-CoA and linolenoyl-CoA. Binds phosphatidic acid (PA) and phosphatidylcholine (PC) in vitro. May play a role in the biosynthesis of phospholipids. The polypeptide is Acyl-CoA-binding domain-containing protein 5 (Oryza sativa subsp. japonica (Rice)).